Reading from the N-terminus, the 428-residue chain is Serine hydroxymethyltransferase (428 aa).

(6S)-5,6,7,8-tetrahydrofolate is bound by residues Leu117 and 121 to 123 (GHL). Lys226 is modified (N6-(pyridoxal phosphate)lysine).

This sequence belongs to the SHMT family. Homodimer. The cofactor is pyridoxal 5'-phosphate.

Its subcellular location is the cytoplasm. It carries out the reaction (6R)-5,10-methylene-5,6,7,8-tetrahydrofolate + glycine + H2O = (6S)-5,6,7,8-tetrahydrofolate + L-serine. It participates in one-carbon metabolism; tetrahydrofolate interconversion. It functions in the pathway amino-acid biosynthesis; glycine biosynthesis; glycine from L-serine: step 1/1. Functionally, catalyzes the reversible interconversion of serine and glycine with tetrahydrofolate (THF) serving as the one-carbon carrier. This reaction serves as the major source of one-carbon groups required for the biosynthesis of purines, thymidylate, methionine, and other important biomolecules. Also exhibits THF-independent aldolase activity toward beta-hydroxyamino acids, producing glycine and aldehydes, via a retro-aldol mechanism. The protein is Serine hydroxymethyltransferase of Aquifex aeolicus (strain VF5).